A 472-amino-acid polypeptide reads, in one-letter code: 3-isopropylmalate dehydratase large subunit (472 aa).

3 residues coordinate [4Fe-4S] cluster: C352, C413, and C416.

Belongs to the aconitase/IPM isomerase family. LeuC type 1 subfamily. Heterodimer of LeuC and LeuD. [4Fe-4S] cluster is required as a cofactor.

It carries out the reaction (2R,3S)-3-isopropylmalate = (2S)-2-isopropylmalate. Its pathway is amino-acid biosynthesis; L-leucine biosynthesis; L-leucine from 3-methyl-2-oxobutanoate: step 2/4. In terms of biological role, catalyzes the isomerization between 2-isopropylmalate and 3-isopropylmalate, via the formation of 2-isopropylmaleate. This Pseudomonas fluorescens (strain ATCC BAA-477 / NRRL B-23932 / Pf-5) protein is 3-isopropylmalate dehydratase large subunit.